A 455-amino-acid polypeptide reads, in one-letter code: Mitochondrial distribution and morphology protein 10 (455 aa).

Disordered stretches follow at residues 216–249 (WETT…EDAV), 278–311 (IRFS…PSPA), and 377–399 (PRSS…PLGE). Low complexity predominate over residues 217 to 227 (ETTNGENGTNT). A compositionally biased stretch (polar residues) spans 228 to 237 (SAPGNASNSR). Over residues 291-301 (AQIPPPSPFTP) the composition is skewed to pro residues.

The protein belongs to the MDM10 family. Component of the ER-mitochondria encounter structure (ERMES) or MDM complex, composed of MMM1, MDM10, MDM12 and MDM34. Associates with the mitochondrial outer membrane sorting assembly machinery SAM(core) complex.

The protein resides in the mitochondrion outer membrane. In terms of biological role, component of the ERMES/MDM complex, which serves as a molecular tether to connect the endoplasmic reticulum and mitochondria. Components of this complex are involved in the control of mitochondrial shape and protein biogenesis and may function in phospholipid exchange. MDM10 is involved in the late assembly steps of the general translocase of the mitochondrial outer membrane (TOM complex). Functions in the TOM40-specific route of the assembly of outer membrane beta-barrel proteins, including the association of TOM40 with the receptor TOM22 and small TOM proteins. Can associate with the SAM(core) complex as well as the MDM12-MMM1 complex, both involved in late steps of the major beta-barrel assembly pathway, that is responsible for biogenesis of all outer membrane beta-barrel proteins. May act as a switch that shuttles between both complexes and channels precursor proteins into the TOM40-specific pathway. Plays a role in mitochondrial morphology and in the inheritance of mitochondria. The polypeptide is Mitochondrial distribution and morphology protein 10 (Coprinopsis cinerea (strain Okayama-7 / 130 / ATCC MYA-4618 / FGSC 9003) (Inky cap fungus)).